Here is a 328-residue protein sequence, read N- to C-terminus: Transcription factor bHLH84 (328 aa).

The tract at residues 145-248 is disordered; it reads QCESSKKRTR…ASRGAATDPQ (104 aa). Positions 220 to 229 are enriched in basic and acidic residues; sequence LSKEDGEDSK. Residues 243–292 form the bHLH domain; that stretch reads AATDPQSLYARKRRERINERLRILQHLVPNGTKVDISTMLEEAVQYVKFL.

The protein belongs to the bHLH protein family. In terms of assembly, homodimer.

It is found in the nucleus. The protein is Transcription factor bHLH84 (BHLH84) of Arabidopsis thaliana (Mouse-ear cress).